The sequence spans 144 residues: Large ribosomal subunit protein uL15 (144 aa).

Positions 1-44 are disordered; it reads MNLNELQPAAGSRHVRNRVGRGTSSGNGKTSGRGQKGQKARGKV. Residues 23–35 show a composition bias toward gly residues; it reads TSSGNGKTSGRGQ.

Belongs to the universal ribosomal protein uL15 family. As to quaternary structure, part of the 50S ribosomal subunit.

Binds to the 23S rRNA. This Leuconostoc mesenteroides subsp. mesenteroides (strain ATCC 8293 / DSM 20343 / BCRC 11652 / CCM 1803 / JCM 6124 / NCDO 523 / NBRC 100496 / NCIMB 8023 / NCTC 12954 / NRRL B-1118 / 37Y) protein is Large ribosomal subunit protein uL15.